The primary structure comprises 104 residues: Cell division protein FtsB (104 aa).

Topologically, residues 1–3 (MGK) are cytoplasmic. Residues 4–21 (LTLLLLVLLGWLQYSLWL) form a helical membrane-spanning segment. Over 22 to 104 (GKNGIHDYTR…NAQQGRPASQ (83 aa)) the chain is Periplasmic. Positions 33-62 (DEDVASQQGNNAKLKARNDRLFAEIDDLNG) form a coiled coil.

Belongs to the FtsB family. As to quaternary structure, part of a complex composed of FtsB, FtsL and FtsQ.

It localises to the cell inner membrane. In terms of biological role, essential cell division protein. May link together the upstream cell division proteins, which are predominantly cytoplasmic, with the downstream cell division proteins, which are predominantly periplasmic. This chain is Cell division protein FtsB, found in Erwinia tasmaniensis (strain DSM 17950 / CFBP 7177 / CIP 109463 / NCPPB 4357 / Et1/99).